Reading from the N-terminus, the 61-residue chain is Large ribosomal subunit protein uL30 (61 aa).

It belongs to the universal ribosomal protein uL30 family. In terms of assembly, part of the 50S ribosomal subunit.

The polypeptide is Large ribosomal subunit protein uL30 (Corynebacterium glutamicum (strain R)).